The following is a 443-amino-acid chain: ATP-dependent protease ATPase subunit HslU (443 aa).

ATP is bound by residues I20, 62-67, D255, E321, and R393; that span reads GVGKTE.

The protein belongs to the ClpX chaperone family. HslU subfamily. A double ring-shaped homohexamer of HslV is capped on each side by a ring-shaped HslU homohexamer. The assembly of the HslU/HslV complex is dependent on binding of ATP.

It is found in the cytoplasm. Functionally, ATPase subunit of a proteasome-like degradation complex; this subunit has chaperone activity. The binding of ATP and its subsequent hydrolysis by HslU are essential for unfolding of protein substrates subsequently hydrolyzed by HslV. HslU recognizes the N-terminal part of its protein substrates and unfolds these before they are guided to HslV for hydrolysis. This chain is ATP-dependent protease ATPase subunit HslU, found in Helicobacter acinonychis (strain Sheeba).